The following is a 145-amino-acid chain: Basic phospholipase A2 PC17 (145 aa).

An N-terminal signal peptide occupies residues 1–21 (MYPAHLLVLLAVCVSLLGASA). Residues 22 to 27 (ISNQPR) constitute a propeptide that is removed on maturation. Intrachain disulfides connect Cys38-Cys98, Cys54-Cys144, Cys56-Cys72, Cys71-Cys125, Cys78-Cys118, Cys87-Cys111, and Cys105-Cys116. Tyr55, Gly57, and Gly59 together coordinate Ca(2+). Residue His75 is part of the active site. Residue Asp76 coordinates Ca(2+). Asp119 is a catalytic residue.

It belongs to the phospholipase A2 family. Group I subfamily. D49 sub-subfamily. Requires Ca(2+) as cofactor. Expressed by the venom gland.

The protein resides in the secreted. The catalysed reaction is a 1,2-diacyl-sn-glycero-3-phosphocholine + H2O = a 1-acyl-sn-glycero-3-phosphocholine + a fatty acid + H(+). Its function is as follows. Snake venom phospholipase A2 (PLA2) that inhibits neuromuscular transmission by blocking acetylcholine release from the nerve termini. PLA2 catalyzes the calcium-dependent hydrolysis of the 2-acyl groups in 3-sn-phosphoglycerides. The chain is Basic phospholipase A2 PC17 from Laticauda colubrina (Yellow-lipped sea krait).